A 1450-amino-acid polypeptide reads, in one-letter code: ABC transporter G family member 37 (1450 aa).

Residues 175–447 (VKLTGAKTHE…FEDCGFRCPE (273 aa)) enclose the ABC transporter 1 domain. Residue 207–214 (GPPSCGKT) coordinates ATP. The ABC transmembrane type-2 1 domain maps to 525–737 (ELFIACISRE…GEIGLSVNEF (213 aa)). Transmembrane regions (helical) follow at residues 544–564 (VYIF…TVFI), 581–601 (ALFF…SMTA), 615–635 (FYPA…LSFF), 661–681 (FILL…LAAI), 687–707 (ASIT…GFVI), and 773–793 (LCAL…ALTF). The segment at 810–838 (SELQGTEKSTEDSSVRKKTTDSPVKTEEE) is disordered. Positions 817 to 838 (KSTEDSSVRKKTTDSPVKTEEE) are enriched in basic and acidic residues. The region spanning 850–1103 (VTFQDLNYFV…IIEYFESVPE (254 aa)) is the ABC transporter 2 domain. 895-902 (GVSGAGKT) serves as a coordination point for ATP. An ABC transmembrane type-2 2 domain is found at 1175–1389 (GQFKSILWKM…TLNGFISSQY (215 aa)). The next 7 membrane-spanning stretches (helical) occupy residues 1194-1214 (YNLM…ALFW), 1226-1246 (MFTV…NNCA), 1282-1302 (IPYI…MIGF), 1313-1333 (LYSM…LVSI), 1339-1359 (VAAI…GFLI), 1365-1385 (PGWW…NGFI), and 1422-1442 (VTAV…AFFV).

The protein belongs to the ABC transporter superfamily. ABCG family. PDR (TC 3.A.1.205) subfamily. Expressed in roots and, to a lower extent, in seedlings.

The protein resides in the cell membrane. Its function is as follows. Together with ABCG36, regulates auxin homeostasis and responses by playing a dual role in coumarin (and derivatives) and in the auxin precursor indole 3-butyric acid (IBA) efflux transport, thus influencing roots and root hairs development. Mediates coumarin exudation in the rhizosphere, especially in iron (Fe) deficient conditions, with a strong specificity for highly oxygenated compounds such as scopoletin and derivatives, dihydroxyscopoletin, esculetin, fraxin, fraxetin and esculin; these molecules improve plant Fe nutrition. Involved in the cellular detoxification of xenobiotics by promoting the excretion of some auxinic herbicides including 2,4-dichlorophenoxyacetic acid (2,4-D), 4-(2,4-dichlorophenoxy)butyric acid (2,4-DB) and other members of the phenoxyalkanoic acid family as well as the polar auxin transport inhibitor, napthylphthalamic acid (NPA). May be a general defense protein. This Arabidopsis thaliana (Mouse-ear cress) protein is ABC transporter G family member 37.